Consider the following 423-residue polypeptide: Histidine--tRNA ligase (423 aa).

This sequence belongs to the class-II aminoacyl-tRNA synthetase family. In terms of assembly, homodimer.

It is found in the cytoplasm. The catalysed reaction is tRNA(His) + L-histidine + ATP = L-histidyl-tRNA(His) + AMP + diphosphate + H(+). In Haemophilus influenzae (strain PittEE), this protein is Histidine--tRNA ligase.